Consider the following 228-residue polypeptide: Endolytic peptidoglycan transglycosylase RlpA (228 aa).

The N-terminal stretch at 1–23 (MIQRHKLIVLIFLLIFCLSGCNT) is a signal peptide.

The protein belongs to the RlpA family.

Its function is as follows. Lytic transglycosylase with a strong preference for naked glycan strands that lack stem peptides. The protein is Endolytic peptidoglycan transglycosylase RlpA of Rickettsia felis (strain ATCC VR-1525 / URRWXCal2) (Rickettsia azadi).